A 641-amino-acid chain; its full sequence is Sodium-dependent nutrient amino acid transporter 1 (641 aa).

The segment at 1-36 (MELKGVQPSNGSANGNGTTNAASTEKTDAEKHTPER) is disordered. Residues 1 to 38 (MELKGVQPSNGSANGNGTTNAASTEKTDAEKHTPERTN) lie on the Cytoplasmic side of the membrane. The segment covering 9 to 24 (SNGSANGNGTTNAAST) has biased composition (low complexity). The segment covering 25 to 35 (EKTDAEKHTPE) has biased composition (basic and acidic residues). 3 helical membrane passes run 39–59 (WGNG…LGNV), 72–92 (GAFL…MYYL), and 109–129 (SVVP…ICII). N-linked (GlcNAc...) asparagine glycosylation is found at asparagine 183 and asparagine 188. 9 helical membrane-spanning segments follow: residues 229 to 249 (PDWK…LVIM), 258 to 278 (AAYF…IRAV), 307 to 327 (AVVQ…MFAS), 341 to 361 (IVTT…FAIL), 401 to 421 (LFSV…IVAL), 441 to 461 (VALI…TPGG), 474 to 494 (TYVV…VYGL), 516 to 536 (CWSF…MVTI), and 552 to 572 (IAGW…GLWY).

The protein belongs to the sodium:neurotransmitter symporter (SNF) (TC 2.A.22) family.

It localises to the membrane. Unusual broad substrate spectrum amino acid:sodium cotransporter that promotes absorption of the D isomers of essential amino acids. Neutral amino acids are the preferred substrates, especially methionine and phenylalanine. The sequence is that of Sodium-dependent nutrient amino acid transporter 1 from Drosophila erecta (Fruit fly).